Reading from the N-terminus, the 762-residue chain is 5-methyltetrahydropteroyltriglutamate--homocysteine methyltransferase (762 aa).

Residues arginine 17 to lysine 20 and lysine 111 contribute to the 5-methyltetrahydropteroyltri-L-glutamate site. L-homocysteine-binding positions include isoleucine 435–serine 437 and glutamate 488. Residues isoleucine 435–serine 437 and glutamate 488 each bind L-methionine. 5-methyltetrahydropteroyltri-L-glutamate is bound by residues arginine 519–cysteine 520 and tryptophan 565. Aspartate 603 provides a ligand contact to L-homocysteine. L-methionine is bound at residue aspartate 603. 5-methyltetrahydropteroyltri-L-glutamate is bound at residue glutamate 609. Zn(2+) is bound by residues histidine 645, cysteine 647, and glutamate 669. Histidine 698 functions as the Proton donor in the catalytic mechanism. Residue cysteine 730 participates in Zn(2+) binding.

Belongs to the vitamin-B12 independent methionine synthase family. Requires Zn(2+) as cofactor.

The enzyme catalyses 5-methyltetrahydropteroyltri-L-glutamate + L-homocysteine = tetrahydropteroyltri-L-glutamate + L-methionine. It participates in amino-acid biosynthesis; L-methionine biosynthesis via de novo pathway; L-methionine from L-homocysteine (MetE route): step 1/1. Its function is as follows. Catalyzes the transfer of a methyl group from 5-methyltetrahydrofolate to homocysteine resulting in methionine formation. This Bacillus cytotoxicus (strain DSM 22905 / CIP 110041 / 391-98 / NVH 391-98) protein is 5-methyltetrahydropteroyltriglutamate--homocysteine methyltransferase.